Here is a 276-residue protein sequence, read N- to C-terminus: UPF0276 protein PA4106 (276 aa).

It belongs to the UPF0276 family.

The sequence is that of UPF0276 protein PA4106 from Pseudomonas aeruginosa (strain ATCC 15692 / DSM 22644 / CIP 104116 / JCM 14847 / LMG 12228 / 1C / PRS 101 / PAO1).